The primary structure comprises 156 residues: Probable succinate transporter subunit YjjB (156 aa).

Transmembrane regions (helical) follow at residues 7–27 (WALL…AMVF), 54–74 (FGMN…IIGI), 86–106 (VFTV…TAMI), and 128–148 (FLKA…PGIW).

Belongs to the ThrE exporter (TC 2.A.79) family. In terms of assembly, the transporter is composed of YjjB and YjjP.

It is found in the cell inner membrane. Functionally, involved in succinate export with YjjP. Both proteins are required for export. This Pectobacterium carotovorum subsp. carotovorum (strain PC1) protein is Probable succinate transporter subunit YjjB.